The sequence spans 123 residues: Small ribosomal subunit protein uS12 (123 aa).

A 3-methylthioaspartic acid modification is found at Asp89.

This sequence belongs to the universal ribosomal protein uS12 family. In terms of assembly, part of the 30S ribosomal subunit. Contacts proteins S8 and S17. May interact with IF1 in the 30S initiation complex.

In terms of biological role, with S4 and S5 plays an important role in translational accuracy. Functionally, interacts with and stabilizes bases of the 16S rRNA that are involved in tRNA selection in the A site and with the mRNA backbone. Located at the interface of the 30S and 50S subunits, it traverses the body of the 30S subunit contacting proteins on the other side and probably holding the rRNA structure together. The combined cluster of proteins S8, S12 and S17 appears to hold together the shoulder and platform of the 30S subunit. This is Small ribosomal subunit protein uS12 from Brucella anthropi (strain ATCC 49188 / DSM 6882 / CCUG 24695 / JCM 21032 / LMG 3331 / NBRC 15819 / NCTC 12168 / Alc 37) (Ochrobactrum anthropi).